We begin with the raw amino-acid sequence, 418 residues long: D-inositol 3-phosphate glycosyltransferase (418 aa).

H9 contributes to the 1D-myo-inositol 3-phosphate binding site. UDP-N-acetyl-alpha-D-glucosamine is bound by residues 15–16 and G23; that span reads QP. Residues 20–25, K78, Y110, T134, and R154 contribute to the 1D-myo-inositol 3-phosphate site; that span reads DSGGMN. UDP-N-acetyl-alpha-D-glucosamine contacts are provided by R231, K236, and R294. Residues Y303, R304, and A306 each contribute to the Mg(2+) site. E316 and E324 together coordinate UDP-N-acetyl-alpha-D-glucosamine. T330 is a Mg(2+) binding site.

It belongs to the glycosyltransferase group 1 family. MshA subfamily. In terms of assembly, homodimer.

It catalyses the reaction 1D-myo-inositol 3-phosphate + UDP-N-acetyl-alpha-D-glucosamine = 1D-myo-inositol 2-acetamido-2-deoxy-alpha-D-glucopyranoside 3-phosphate + UDP + H(+). In terms of biological role, catalyzes the transfer of a N-acetyl-glucosamine moiety to 1D-myo-inositol 3-phosphate to produce 1D-myo-inositol 2-acetamido-2-deoxy-glucopyranoside 3-phosphate in the mycothiol biosynthesis pathway. The polypeptide is D-inositol 3-phosphate glycosyltransferase (Corynebacterium glutamicum (strain R)).